Reading from the N-terminus, the 333-residue chain is Taste receptor type 2 member 38 (333 aa).

Topologically, residues 1-17 (MLTLTRIHTVSYEVRST) are extracellular. A helical membrane pass occupies residues 18 to 38 (FLFISVLEFAVGFLTNAFVFL). Topologically, residues 39–55 (VNFWDVVKRQPLSNSDC) are cytoplasmic. Residues 56–76 (VLLCLSISRLFLHGLLFLSAI) form a helical membrane-spanning segment. Residues 77-94 (QLTHFQKLSEPLNHSYQA) lie on the Extracellular side of the membrane. The chain crosses the membrane as a helical span at residues 95–115 (IIMLWMIANQANLWLAACLSL). Residues 116–142 (LYCSKLIRFSHTFLICLASWVSRKISQ) lie on the Cytoplasmic side of the membrane. Residues 143–163 (MLLGIILCSCICTVLCVWCFF) form a helical membrane-spanning segment. Residues 164–190 (SRPHFTVTTVLFMNNNTRLNWQIKDLN) are Extracellular-facing. Asn178 is a glycosylation site (N-linked (GlcNAc...) asparagine). Residues 191 to 211 (LFYSFLFCYLWSVPPFLLFLV) traverse the membrane as a helical segment. The Cytoplasmic segment spans residues 212-251 (SSGMLTVSLGRHMRTMKVYTRDSRDPSLEAHIKALKSLVS). Residues 252 to 272 (FFCFFVISSCAAFISVPLLIL) form a helical membrane-spanning segment. The Extracellular portion of the chain corresponds to 273–276 (WRDK). The chain crosses the membrane as a helical span at residues 277–297 (IGVMVCVGIMAACPSGHAAVL). Over 298-333 (ISGNAKLRRAVTTILLWAQSSLKVRADHKADSRTLC) the chain is Cytoplasmic.

It belongs to the G-protein coupled receptor T2R family.

Its subcellular location is the membrane. Functionally, receptor that may play a role in the perception of bitterness and is gustducin-linked. May play a role in sensing the chemical composition of the gastrointestinal content. The activity of this receptor may stimulate alpha gustducin, mediate PLC-beta-2 activation and lead to the gating of TRPM5. This Pan troglodytes (Chimpanzee) protein is Taste receptor type 2 member 38 (TAS2R38).